The following is a 281-amino-acid chain: Probable catechol O-methyltransferase 2 (281 aa).

I78, E100, S108, E127, V128, A156, and D183 together coordinate S-adenosyl-L-methionine. Residue D183 coordinates Mg(2+). Residue K186 coordinates substrate. Positions 211 and 212 each coordinate Mg(2+). Residue N212 participates in substrate binding.

Belongs to the class I-like SAM-binding methyltransferase superfamily. Cation-dependent O-methyltransferase family. Mg(2+) serves as cofactor.

The protein resides in the vacuole. The enzyme catalyses a catechol + S-adenosyl-L-methionine = a guaiacol + S-adenosyl-L-homocysteine + H(+). This is Probable catechol O-methyltransferase 2 from Schizosaccharomyces pombe (strain 972 / ATCC 24843) (Fission yeast).